Consider the following 32-residue polypeptide: Lectin (32 aa).

It belongs to the leguminous lectin family. In terms of assembly, homotetramer.

Its function is as follows. Metalloglycoprotein, containing Ca, Mg, Mn, and Zn and the carbohydrates galactose, glucosamine, mannose, and fucose. It agglutinates erythrocytes of blood group A1. This chain is Lectin, found in Macrotyloma axillare (Perennial horse gram).